Consider the following 175-residue polypeptide: NADH-ubiquinone oxidoreductase chain 6 (175 aa).

5 helical membrane passes run 1–21, 25–45, 47–67, 88–108, and 149–169; these read MMIY…VGFS, SPIY…GIVM, FGGS…MLVV, TVLS…LYMF, and YGVW…LVVL.

It belongs to the complex I subunit 6 family. As to quaternary structure, core subunit of respiratory chain NADH dehydrogenase (Complex I) which is composed of 45 different subunits.

The protein resides in the mitochondrion inner membrane. It catalyses the reaction a ubiquinone + NADH + 5 H(+)(in) = a ubiquinol + NAD(+) + 4 H(+)(out). In terms of biological role, core subunit of the mitochondrial membrane respiratory chain NADH dehydrogenase (Complex I) which catalyzes electron transfer from NADH through the respiratory chain, using ubiquinone as an electron acceptor. Essential for the catalytic activity and assembly of complex I. This is NADH-ubiquinone oxidoreductase chain 6 (MT-ND6) from Rhinoceros unicornis (Greater Indian rhinoceros).